We begin with the raw amino-acid sequence, 1368 residues long: MAVAEAKPQYSHAEKKRFRKSFGKQTDIMPIPNLLEIQLKSYRDFLQTDTKLSEQLNTGLHAAFSSVFPIESFSGNARLEYVGYKLGEPAFDVRECKLRGLTYSAPLRVKIRLVVLDKDASDDPKPIKDIREQDVFMGEIPLMTDVGTFVVNGTERVVVSQLHRSPGVIFEHDKGKTHSSGKLLYSARIIPYRGSWLDFEFDPKDCVYVRIDRRRKLPVTILLRALGYEAEDILNEFFETTCCHLKNGEYHIDLIPQRLRGEIASFDIHVPETGELIVEQGRRITARHIKQMEKSQMQDLVVPRDYLIGKTLAKNIIDTSTGEFLAQANDEITEELLDAMASHGILQIDMIYTNDLDHGSYISDTLKIDPTGSQLEALVEIYRMMRPGEPPTKEAAEALFKNLFFVEERYDLSAVGRMKFNRRVGIKSDEGPGTLTKEDILSVIKTLIDIRNGIGMVDDIDHLGNRRVRSVGEMTENQFRVGLVRVERAVKERLSLVESENLMPQDLINAKPVSAAIKEFFGSSQLSQFMDQVNPLSGVTHKRRVSALGPGGLTRERAGFEVRDVHTTHYGRVCPIETPEGPNIGLINSLSVYARTNEYGFIETPCRKVVNGRVTDEVEYLSAIEEVDQYIAQSNVELDAQGNILADLVPCRHQNEFSLTTPDKINYMDVSPKQIVSVAASLIPFLEHDDANRALMGSNMQRQAVPTLRSEKPLVGTGMERIVASDSGVSVVAKRGGVIDLVDASRIVVRVNDDETTAGETGVDIYNLTKYFRSNQDTCINQRPIVSTGDRIQRGDVLADGPCTDMGELALGQNLLVAFMPWNGYNFEDSILISERIVHDDRFTTIHIEELTCIARDTKLGTEEITADIPNVGESALSNLDESGVVYIGAEVKAGDILVGKVTPKGETQLTPEEKLLRAIFGEKASDVKDSSLRVPSGMNGTVIDVQVFTRDGLEKDARAKSIEEEHLARVRKDLIDERRIREEDIYHRVSHLLLDKVATGGPGSLKPGSKITQDYLDKVEREKWFDIRIEDDAISQQLEQLSKQLELLTKEMEKRFNDSRKKIIQGDDLAPGVLKIVKVYLAVKRRIQPGDKMAGRHGNKGVISIVVPVEDMPHMEDGTAVDIVLNPLGVPSRMNIGQVLETHLGLAAKGLGRKIAQMLDEKQTPEAIKAYLEKIYNHDGVQRVNLKCLNDDELMTLADNLRAGVPMATPVFDGATEQEIKSMLQLADLPADGKTVLIDGRTGNKFDNPVTVGYMYMLKLNHLVDDKMHARSTGSYSLVTQQPLGGKAQFGGQRFGEMEVWALEAYGAAYTLQEMLTVKSDDVGGRTKIYKNIVDGDHRMDPGMPESFNVLLKEIRALGIDIELEHD.

The protein belongs to the RNA polymerase beta chain family. As to quaternary structure, the RNAP catalytic core consists of 2 alpha, 1 beta, 1 beta' and 1 omega subunit. When a sigma factor is associated with the core the holoenzyme is formed, which can initiate transcription.

It catalyses the reaction RNA(n) + a ribonucleoside 5'-triphosphate = RNA(n+1) + diphosphate. Its function is as follows. DNA-dependent RNA polymerase catalyzes the transcription of DNA into RNA using the four ribonucleoside triphosphates as substrates. The protein is DNA-directed RNA polymerase subunit beta of Legionella pneumophila (strain Lens).